Consider the following 425-residue polypeptide: Serine--tRNA ligase (425 aa).

An L-serine-binding site is contributed by 233–235 (TAE). 264–266 (RRE) is a binding site for ATP. An L-serine-binding site is contributed by glutamate 287. 351-354 (EISS) serves as a coordination point for ATP. Residue serine 385 participates in L-serine binding.

It belongs to the class-II aminoacyl-tRNA synthetase family. Type-1 seryl-tRNA synthetase subfamily. Homodimer. The tRNA molecule binds across the dimer.

Its subcellular location is the cytoplasm. It carries out the reaction tRNA(Ser) + L-serine + ATP = L-seryl-tRNA(Ser) + AMP + diphosphate + H(+). The catalysed reaction is tRNA(Sec) + L-serine + ATP = L-seryl-tRNA(Sec) + AMP + diphosphate + H(+). It participates in aminoacyl-tRNA biosynthesis; selenocysteinyl-tRNA(Sec) biosynthesis; L-seryl-tRNA(Sec) from L-serine and tRNA(Sec): step 1/1. In terms of biological role, catalyzes the attachment of serine to tRNA(Ser). Is also able to aminoacylate tRNA(Sec) with serine, to form the misacylated tRNA L-seryl-tRNA(Sec), which will be further converted into selenocysteinyl-tRNA(Sec). This is Serine--tRNA ligase from Prochlorococcus marinus (strain MIT 9515).